The chain runs to 370 residues: Peptidyl-prolyl cis-trans isomerase D (370 aa).

Serine 5 carries the phosphoserine modification. One can recognise a PPIase cyclophilin-type domain in the interval phenylalanine 19 to glutamate 183. Position 171 is an N6-acetyllysine (lysine 171). A chaperone activity region spans residues lysine 185–aspartate 215. Phosphoserine is present on serine 198. The interaction with HSP90AB1 stretch occupies residues lysine 214–alanine 370. 3 TPR repeats span residues threonine 223–serine 256, leucine 273–asparagine 306, and threonine 307–aspartate 340.

Belongs to the cyclophilin-type PPIase family. PPIase D subfamily. Identified in ESR1 or NR3C1/GCR steroid receptor-chaperone complexes. Found in HSP90 chaperone complexes with kinase clients LCK or EIF2AK1. Two monomers associate with one HSP90 homodimer. Interacts with HSP90AA1. Interacts with HSP90AB1; PPID and FKBP4 compete for binding to HSP90AB1 and the interaction is mutually exclusive with the PPID:HSPA8 interaction. Interacts with HSPA8; PPID and STIP1 but not FKBP4 compete for binding to HSPA8 and the interaction is mutually exclusive with the PPID:HSP90AB1 interaction. Interacts with S100A1 and S100A2; the interactions dissociate the PPID:HSP90AA1 interaction. Interacts with S100A6. Interacts with MYB, ILF2, XRCC6, RACK1 and RPS3. Interacts with cytoplasmic dynein 1 intermediate chain (DYNC1I1 or DYNC1I2). In terms of tissue distribution, widely expressed.

It localises to the cytoplasm. It is found in the nucleus. The protein resides in the nucleolus. The protein localises to the nucleoplasm. The enzyme catalyses [protein]-peptidylproline (omega=180) = [protein]-peptidylproline (omega=0). Less sensitive to inhibition by cyclosporin A than is CYP-18. Functionally, PPIase that catalyzes the cis-trans isomerization of proline imidic peptide bonds in oligopeptides and may therefore assist protein folding. Proposed to act as a co-chaperone in HSP90 complexes such as in unligated steroid receptors heterocomplexes. Different co-chaperones seem to compete for association with HSP90 thus establishing distinct HSP90-co-chaperone-receptor complexes with the potential to exert tissue-specific receptor activity control. May have a preference for estrogen receptor complexes and is not found in glucocorticoid receptor complexes. May be involved in cytoplasmic dynein-dependent movement of the receptor from the cytoplasm to the nucleus. May regulate MYB by inhibiting its DNA-binding activity. Involved in regulation of AHR signaling by promoting the formation of the AHR:ARNT dimer; the function is independent of HSP90 but requires the chaperone activity. Involved in regulation of UV radiation-induced apoptosis. Promotes cell viability in anaplastic lymphoma kinase-positive anaplastic large-cell lymphoma (ALK+ ALCL) cell lines. (Microbial infection) May be involved in hepatitis C virus (HCV) replication and release. The chain is Peptidyl-prolyl cis-trans isomerase D from Homo sapiens (Human).